We begin with the raw amino-acid sequence, 468 residues long: tRNA (guanine(37)-N(1))-methyltransferase 1 (468 aa).

Residues His-207, 245–246 (DL), and 273–274 (DA) contribute to the S-adenosyl-L-methionine site. The segment at 301-348 (KEAAVSRGGETNSSGEEIRESNASINEPLGANKKPSGTTKTENGVGKD) is disordered. Residues 309–325 (GETNSSGEEIRESNASI) show a composition bias toward polar residues. Residue Asn-380 coordinates S-adenosyl-L-methionine.

The protein belongs to the class I-like SAM-binding methyltransferase superfamily. TRM5/TYW2 family. Monomer.

It localises to the mitochondrion matrix. The protein localises to the nucleus. It is found in the cytoplasm. The catalysed reaction is guanosine(37) in tRNA + S-adenosyl-L-methionine = N(1)-methylguanosine(37) in tRNA + S-adenosyl-L-homocysteine + H(+). Specifically methylates the N1 position of guanosine-37 in various cytoplasmic and mitochondrial tRNAs. Methylation is not dependent on the nature of the nucleoside 5' of the target nucleoside. This is the first step in the biosynthesis of wybutosine (yW), a modified base adjacent to the anticodon of tRNAs and required for accurate decoding. In Arabidopsis thaliana (Mouse-ear cress), this protein is tRNA (guanine(37)-N(1))-methyltransferase 1.